An 826-amino-acid polypeptide reads, in one-letter code: MTAIVGFDQLSKALIDAGTNLLSPPSSTDDLLTLLDETESLLKNVEQDQPLSMQSALIPSRNALVSVDLLSHPDSDVRVSVVSCLTEIVRITAPETPYSDDLMKEIFRLTIEAFEKLADASSRSYKKAEFVLDNVAKVKSCLVMLDLECYDLILQMFRNFFKFIRSDHPQLVFSSMELIMIAIIDETEQVSTDLLDSLLATVKKENQNVSPMSWSLAEKVLSRCARKLKPYIIEALKSRGTSLDMYSPVVSSICQSVFNTPKVHSPVNTKEHEEKLDLGHSRKENLSKSSSKRPARHETRGINEKEKVRNGNKSSLLKQSLKQVRSESTDAEITGKRGRKPNSLMNPEDYDISWLSGKRDPLKTSSNKKIQKKGSGGVSSLGKVPAKKTPLPKENSPATSSRSLTGSLKRSRVKMDESDYDSDSLSSPRLKKLASCFRDEEPNQEDDRKIGNSSKQTRSKNGLEKSQKTAKKKPVVEAKIVNSSGKRLSARSVAKRRNLERAPLDTLVPQSSKRKKMVSQVAARQLANESEEETPKSHPTRRRTVRKEVESDGFGEDLVGKRVNIWWPLDKTFYEGVIDSYCTRKKMHRVIYSDGDSEELNLTEERWELLEDDTSADEDKEIDLPESIPLSDIMQRQKVKKSKNVAVSVEPTSSSGVRSSSRTLMKKDCGKRLNKQVEKTREGKNLRSLKELNAETDRTAEEQEVSLEAESDDRSEEQEYEDDCSDKKEQSQDKGVEAETKEEEKQYPNSEGESEGEDSESEEEPKWRETDDMEDDEEEEEEEIDHMEDEAEEEKEEVDDKEASANMSEIEKEEEEEEEDEEKRKS.

5 HEAT repeats span residues 18 to 54 (GTNL…LSMQ), 55 to 94 (SALI…ITAP), 151 to 188 (DLIL…DETE), 189 to 226 (QVST…RCAR), and 230 to 267 (PYII…HSPV). 2 disordered regions span residues 261–551 (PKVH…EVES) and 640–826 (KKSK…KRKS). 2 stretches are compositionally biased toward basic and acidic residues: residues 269–286 (TKEH…KENL) and 296–309 (RHET…EKVR). Residues 281–288 (SRKENLSK) carry the Nuclear localization signal 1 motif. Polar residues predominate over residues 311-323 (GNKSSLLKQSLKQ). A Nuclear localization signal 2 motif is present at residues 357-364 (GKRDPLKT). The segment covering 396–408 (SPATSSRSLTGSL) has biased composition (polar residues). One copy of the HEAT 6 repeat lies at 424-461 (SLSSPRLKKLASCFRDEEPNQEDDRKIGNSSKQTRSKN). A compositionally biased stretch (basic and acidic residues) spans 437 to 450 (FRDEEPNQEDDRKI). A compositionally biased stretch (polar residues) spans 451 to 460 (GNSSKQTRSK). Residues 644–663 (NVAVSVEPTSSSGVRSSSRT) show a composition bias toward low complexity. A compositionally biased stretch (basic and acidic residues) spans 665–701 (MKKDCGKRLNKQVEKTREGKNLRSLKELNAETDRTAE). The span at 702 to 724 (EQEVSLEAESDDRSEEQEYEDDC) shows a compositional bias: acidic residues. Basic and acidic residues predominate over residues 725–746 (SDKKEQSQDKGVEAETKEEEKQ). Composition is skewed to acidic residues over residues 752–763 (GESEGEDSESEE), 771–800 (DDME…EVDD), and 811–826 (EKEE…KRKS). Residues 770-825 (TDDMEDDEEEEEEEIDHMEDEAEEEKEEVDDKEASANMSEIEKEEEEEEEDEEKRK) are a coiled coil.

It belongs to the PDS5 family. As to quaternary structure, interacts with the cohesin complex.

It is found in the nucleus. Cohesin cofactor dispensable during the meiotic division but playing an important role in DNA repair by homologous recombination (HR) probably by helping SMC5/SMC6 complex. Regulator of sister chromatid cohesion in mitosis which may stabilize cohesin complex association with chromatin. May couple sister chromatid cohesion during mitosis to DNA replication. Cohesion ensures that chromosome partitioning is accurate in both meiotic and mitotic cells and plays an important role in DNA repair. This Arabidopsis thaliana (Mouse-ear cress) protein is Sister chromatid cohesion protein PDS5 homolog D.